The chain runs to 221 residues: MKTATAVVLLLFAFTSKSYFFGVANAANSPVLDTDGDELQTGVQYYVLSSISGAGGGGLALGRATGQSCPEIVVQRRSDLDNGTPVIFSNADSKDDVVRVSTDVNIEFVPIRDRLCSTSTVWRLDNYDNSAGKWWVTTDGVKGEPGPNTLCSWFKIEKAGVLGYKFRFCPSVCDSCTTLCSDIGRHSDDDGQIRLALSDNEWAWMFKKASKTIKQVVNAKH.

Positions 1-26 (MKTATAVVLLLFAFTSKSYFFGVANA) are cleaved as a signal peptide. Cysteine 69 and cysteine 116 are joined by a disulfide.

Belongs to the protease inhibitor I3 (leguminous Kunitz-type inhibitor) family.

The sequence is that of 21 kDa seed protein (ASP) from Theobroma cacao (Cacao).